We begin with the raw amino-acid sequence, 153 residues long: Large ribosomal subunit protein uL30 (153 aa).

This sequence belongs to the universal ribosomal protein uL30 family. In terms of assembly, part of the 50S ribosomal subunit.

The protein is Large ribosomal subunit protein uL30 of Methanosarcina acetivorans (strain ATCC 35395 / DSM 2834 / JCM 12185 / C2A).